The chain runs to 204 residues: Ribonuclease HII (204 aa).

The RNase H type-2 domain maps to 16-204 (ESIAGCDEVG…RRSFLKKILK (189 aa)). The a divalent metal cation site is built by Asp-22, Glu-23, and Asp-120.

The protein belongs to the RNase HII family. Mn(2+) serves as cofactor. Requires Mg(2+) as cofactor.

Its subcellular location is the cytoplasm. The enzyme catalyses Endonucleolytic cleavage to 5'-phosphomonoester.. In terms of biological role, endonuclease that specifically degrades the RNA of RNA-DNA hybrids. This is Ribonuclease HII from Alkaliphilus metalliredigens (strain QYMF).